Reading from the N-terminus, the 406-residue chain is Cysteine desulfurase (406 aa).

The residue at position 226 (Lys-226) is an N6-(pyridoxal phosphate)lysine. Residue Cys-364 is the Cysteine persulfide intermediate of the active site.

It belongs to the class-V pyridoxal-phosphate-dependent aminotransferase family. Csd subfamily. In terms of assembly, homodimer. Interacts with SufE and the SufBCD complex composed of SufB, SufC and SufD. The interaction with SufE is required to mediate the direct transfer of the sulfur atom from the S-sulfanylcysteine. Requires pyridoxal 5'-phosphate as cofactor.

The protein resides in the cytoplasm. It catalyses the reaction (sulfur carrier)-H + L-cysteine = (sulfur carrier)-SH + L-alanine. It carries out the reaction L-selenocysteine + AH2 = hydrogenselenide + L-alanine + A + H(+). It functions in the pathway cofactor biosynthesis; iron-sulfur cluster biosynthesis. Functionally, cysteine desulfurases mobilize the sulfur from L-cysteine to yield L-alanine, an essential step in sulfur metabolism for biosynthesis of a variety of sulfur-containing biomolecules. Component of the suf operon, which is activated and required under specific conditions such as oxidative stress and iron limitation. Acts as a potent selenocysteine lyase in vitro, that mobilizes selenium from L-selenocysteine. Selenocysteine lyase activity is however unsure in vivo. The chain is Cysteine desulfurase (sufS) from Shigella flexneri.